Reading from the N-terminus, the 978-residue chain is Sensor histidine kinase TodS (978 aa).

In terms of domain architecture, PAS 1 spans 32-103 (CEEHARIIFD…TQKRLVETAS (72 aa)). One can recognise a PAC 1 domain in the interval 108–162 (VRCDVEILGKSGGREVIAVDFSLLPICNEEGSIVYLLAEGRNITDKKKAEAMLAL). The Histidine kinase 1 domain maps to 187-405 (KVSHELRTPL…LFQVKLPLNA (219 aa)). A Phosphohistidine; by autocatalysis modification is found at histidine 190. The Response regulatory domain occupies 452–567 (RVLIVEDNPD…ELRARVSNLV (116 aa)). Aspartate 500 bears the 4-aspartylphosphate mark. The region spanning 611 to 681 (SEARWKAVYE…QRLANLLQGG (71 aa)) is the PAS 2 domain. The PAC 2 domain occupies 685–737 (YSVERSYLCKNGSTIWANASVSLMPQRVGESPVILQIIDDITEKKQAQENLNQ). One can recognise a Histidine kinase 2 domain in the interval 757 to 974 (YIAHEINQPL…CFLVSIPARQ (218 aa)). Residue histidine 760 is modified to Phosphohistidine.

Homodimer. Binds as a dimer to a pseudopalindromic sequence. Post-translationally, autophosphorylated. Activation requires a sequential transfer of a phosphate group from a His in the primary transmitter domain, to an Asp in the receiver domain and to a His in the secondary transmitter domain.

The protein resides in the cytoplasm. The catalysed reaction is ATP + protein L-histidine = ADP + protein N-phospho-L-histidine.. Member of the two-component regulatory system TodS/TodT involved in the regulation of toluene degradation. Phosphorylates TodT via a four-step phosphorelay in response to toluene. The sequence is that of Sensor histidine kinase TodS (todS) from Pseudomonas putida (strain ATCC 700007 / DSM 6899 / JCM 31910 / BCRC 17059 / LMG 24140 / F1).